Reading from the N-terminus, the 473-residue chain is Homeobox protein ATH1 (473 aa).

Positions 205 to 221 are SR/KY domain; it reads SKYLHSVQEILSHFAAY. The interval 266–336 is BELL domain; sequence QRRALEAKKT…NLRERICKKI (71 aa). Positions 372-434 form a DNA-binding region, homeobox; the sequence is IWRPQRGLPE…NARVRLWKPM (63 aa). The disordered stretch occupies residues 448-473; the sequence is NNSHIQPNGPTLRMPKSVMMSQAMHK.

Belongs to the TALE/BELL homeobox family. As to quaternary structure, may form heterodimeric complex with the TALE/KNOX protein STM. As to expression, most abundant in flowers.

It is found in the nucleus. Functionally, transcription factor which may be involved in the signal transduction pathway downstream of the COP1 gene. Controls floral competency as a specific activator of FLC expression. Is responsive of the nuclear import of SHOOT MERISTEMLESS (STM). This Arabidopsis thaliana (Mouse-ear cress) protein is Homeobox protein ATH1 (ATH1).